The primary structure comprises 98 residues: Protein translation factor SUI1 homolog (98 aa).

Belongs to the SUI1 family.

This is Protein translation factor SUI1 homolog from Thermococcus gammatolerans (strain DSM 15229 / JCM 11827 / EJ3).